We begin with the raw amino-acid sequence, 209 residues long: Small ribosomal subunit protein uS4 (209 aa).

The 63-residue stretch at 99–161 (CRLDNIAFRL…SSKLVVVEMG (63 aa)) folds into the S4 RNA-binding domain.

The protein belongs to the universal ribosomal protein uS4 family. In terms of assembly, part of the 30S ribosomal subunit. Contacts protein S5. The interaction surface between S4 and S5 is involved in control of translational fidelity.

In terms of biological role, one of the primary rRNA binding proteins, it binds directly to 16S rRNA where it nucleates assembly of the body of the 30S subunit. Functionally, with S5 and S12 plays an important role in translational accuracy. In Acidobacterium capsulatum (strain ATCC 51196 / DSM 11244 / BCRC 80197 / JCM 7670 / NBRC 15755 / NCIMB 13165 / 161), this protein is Small ribosomal subunit protein uS4.